Reading from the N-terminus, the 475-residue chain is MSWRPQYRCSKFRNVYGKVASRENCYDCIPITKNVHDNHFCAVNPKFLAIVTESAGGGSFFVIPLHQTGRIEPNYPKVCGHQGTVLDIKWNPFIENIIASCSEDTSVRIWEIPDGGLKRNMTEAVLELYGHSRRVGLIEWHPTAINILFSAGYDYKILIWNLDVGEAVKMIDCHTDVILCMSFNTDGSLMATTCKDKKLRVLEPRSGRVLQETTCKNHKVTRVVFFGDMKRLLTTGVSKWNTRQIALWDQEDLSMPVTEEEIDGLSGLLFPFYDVDTHMLYLAGKGDGNIRYYEITAEKPYLTYLMEFRSPAPQKGLGVMPKHGLDVSACEIFRFYKLVTLKNQIEPISMIVPRRSENYQEDIYPMTSGTEPALSPDEWLRGVNKGPVLMSLKEGYRKENKAIYKAPVKEKKSLVVNGIDLLENVPPRTENELLRMFFKQQEEIRRLKEQLSQRDLLVRQLELELKNLRNSPKDS.

WD repeat units lie at residues 80 to 120, 130 to 172, 174 to 212, 215 to 258, and 260 to 303; these read GHQG…LKRN, GHSR…KMID, HTDVILCMSFNTDGSLMATTCKDKKLRVLEPRSGRVLQE, CKNH…MPVT, and EEID…PYLT. A coiled-coil region spans residues 431 to 470; that stretch reads NELLRMFFKQQEEIRRLKEQLSQRDLLVRQLELELKNLRN.

This sequence belongs to the WD repeat coronin family.

The protein resides in the cytoplasm. The protein localises to the cytoskeleton. Its function is as follows. May play a role in the reorganization of neuronal actin structure. The protein is Coronin-2B (coro2b) of Xenopus laevis (African clawed frog).